The sequence spans 974 residues: MSFLIRSICFLILIPSFLITFVSATQHLCHSDQKDALLDFKNEFGMVDSKSWVNKSDCCSWDGITCDAKSGNVIGLDLSSIFLYGQLKSNSSLFKLRHLRDLNLANNNFNNSPIPAEFDKLTGLERLDLSQSSLSGQIPINLLQLTKLVSLDLSSSDFFGDESFHYLSIDKSFLPLLARNLRNLRELDMSYVKISSEIPEEFSNIRSLRSLNLNGCNLFGEFPSSILLIPNLQSIDLGNNPNLRGNLPVFHENNSLLKLTILYTSFSGAIPDSISSLKNLTSLTLSVSYFSGKIPFSLGNLSHLSHLSLSSNNLIGEIPSSIGNLNQLTNFYVGGNKLSGNLPATLSNLTKLNTISLSSNQFTGSLPPSISQLSKLKFFFADDNPFIGAILSPLLKIPSLTRIHLSYNQLNDLVGIENIFMLPNLETFYIYHYNYTKVRPLDLNVFSSLKQLGTLYISRIPISTTNITSDFPSNLEYLSLRSCNITDFPEFIRKGRNLQILDLSNNKIKGQVPDWLWRMPTLNSVDLSNNSLSGFHVSVKASPESQLTSVDLSSNAFQGPLFLPSKSLRYFSGSNNNFTGKIPRSICGLSSLEILDLSNNNLNGSLPWCLETLMSSLSDLDLRNNSLSGSLPEIFMNATKLRSLDVSHNRMEGKLPGSLTGCSSLEVLNVGSNRINDMFPFELNSLQKLQVLVLHSNKFHGTLHNVDGVWFGFPQLQIIDVSHNDFFGILPSDYFMNWTAMSSKKDNNIEPEYIQNPSVYGSSLGYYTSLVLMSKGVSMEMERVLTIYTAIDLSGNQLHGKIPDSIGLLKELRILNMSSNGFTGHIPSSLANLKNLESLDISQNNISGEIPPELGTLSSLAWINVSHNQLVGSIPQGTQFQRQKCSSYEGNPGLNGPSLENVCGHIKESTPTQTEPLETKEEEEEESFSWIAAGLGFAPGVVFGLAMGYIVVSYKHQWFMKTFGRSKQQNTRTR.

A signal peptide spans M1–A24. At T25 to W930 the chain is on the extracellular side. 2 N-linked (GlcNAc...) asparagine glycosylation sites follow: N54 and N90. LRR repeat units lie at residues L96 to K120, T122 to L145, K147 to Y166, L181 to N204, R206 to I229, and P230 to E252. Residue N253 is glycosylated (N-linked (GlcNAc...) asparagine). LRR repeat units follow at residues N254 to L277, K278 to L301, S302 to L325, Q327 to L349, and T350 to L373. N-linked (GlcNAc...) asparagine glycans are attached at residues N279 and N300. N-linked (GlcNAc...) asparagine glycosylation occurs at N348. Residues S374 to K396 form an LRR 12; degenerate repeat. LRR repeat units follow at residues I397 to L422, L425 to S448, T454 to P472, S473 to G495, R496 to M519, T521 to S542, E544 to Y570, S572 to L589, S590 to S616, S618 to A638, T639 to C662, S664 to S685, Q687 to G712, F713 to N737, L785 to L809, K810 to L833, K834 to L857, and S859 to R882. N-linked (GlcNAc...) asparagine glycosylation is found at N434, N466, and N484. N-linked (GlcNAc...) asparagine glycosylation occurs at N529. N-linked (GlcNAc...) asparagine glycans are attached at residues N577, N603, N624, and N637. N737 is a glycosylation site (N-linked (GlcNAc...) asparagine). N-linked (GlcNAc...) asparagine glycans are attached at residues N816, N845, and N864. A disordered region spans residues L899–E923. The helical transmembrane segment at I931–V951 threads the bilayer. Over V952–R974 the chain is Cytoplasmic.

It belongs to the RLP family.

The protein resides in the cell membrane. The protein is Receptor-like protein 7 of Arabidopsis thaliana (Mouse-ear cress).